Here is a 373-residue protein sequence, read N- to C-terminus: MWVCSTLWRVRTPARQWRGLLPASGCHGPAASSYSASAEPARVRALVYGHHGDPAKVVELKNLELAAVRGSDVRVKMLAAPINPSDINMIQGNYGFLPELPAVGGNEGVAQVVAVGSNVTGLKPGDWVIPANAGLGTWRTEAVFSEEALIQVPSDIPLQSAATLGVNPCTAYRMLMDFEQLQPGDSVIQNASNSGVGQAVIQIAAALGLRTINVVRDRPDIQKLSDRLKSLGAEHVITEEELRRPEMKNFFKDMPQPRLALNCVGGKSSTELLRQLARGGTMVTYGGMAKQPVVASVSLLIFKDLKLRGFWLSQWKKDHSPDQFKELILTLCDLIRRGQLTAPACSQVPLQDYQSALEASMKPFISSKQILTM.

Residues 1-53 (MWVCSTLWRVRTPARQWRGLLPASGCHGPAASSYSASAEPARVRALVYGHHGD) constitute a mitochondrion transit peptide. At Lys61 the chain carries N6-acetyllysine; alternate. Position 61 is an N6-succinyllysine; alternate (Lys61). Tyr94 serves as the catalytic Proton donor. Residues Asn167, 193–196 (NSGV), and 216–218 (RDR) each bind NADP(+). N6-acetyllysine; alternate occurs at positions 252 and 267. Lys252 and Lys267 each carry N6-succinyllysine; alternate. Residues 285–288 (YGGM) and 310–312 (FWL) contribute to the NADP(+) site. At Lys316 the chain carries N6-succinyllysine. Lys368 serves as a coordination point for NADP(+).

It belongs to the zinc-containing alcohol dehydrogenase family. Quinone oxidoreductase subfamily. In terms of assembly, homodimer. Isoform 2 interacts with PPARA in the nucleus and increases its activity. In terms of tissue distribution, highly expressed in skeletal and heart muscle. Expressed at lower level in placenta, liver, kidney and pancreas. Weakly or not expressed in lung.

It localises to the mitochondrion. Its subcellular location is the cytoplasm. The protein localises to the nucleus. It carries out the reaction a 2,3-saturated acyl-[ACP] + NADP(+) = a (2E)-enoyl-[ACP] + NADPH + H(+). It catalyses the reaction (2E)-butenoyl-[ACP] + NADPH + H(+) = butanoyl-[ACP] + NADP(+). The enzyme catalyses (2E)-hexenoyl-[ACP] + NADPH + H(+) = hexanoyl-[ACP] + NADP(+). The catalysed reaction is (2E)-octenoyl-[ACP] + NADPH + H(+) = octanoyl-[ACP] + NADP(+). It carries out the reaction (2E)-decenoyl-[ACP] + NADPH + H(+) = decanoyl-[ACP] + NADP(+). It catalyses the reaction (2E)-dodecenoyl-[ACP] + NADPH + H(+) = dodecanoyl-[ACP] + NADP(+). The enzyme catalyses (2E)-tetradecenoyl-[ACP] + NADPH + H(+) = tetradecanoyl-[ACP] + NADP(+). The catalysed reaction is (2E)-hexadecenoyl-[ACP] + NADPH + H(+) = hexadecanoyl-[ACP] + NADP(+). In terms of biological role, catalyzes the NADPH-dependent reduction of trans-2-enoyl thioesters in mitochondrial fatty acid synthesis (fatty acid synthesis type II). Fatty acid chain elongation in mitochondria uses acyl carrier protein (ACP) as an acyl group carrier, but the enzyme accepts both ACP and CoA thioesters as substrates in vitro. Displays a preference for medium-chain over short- and long-chain substrates. May provide the octanoyl chain used for lipoic acid biosynthesis, regulating protein lipoylation and mitochondrial respiratory activity particularly in Purkinje cells. Involved in iron homeostasis; affecting Fe-S cluster assembly and ceramide metabolism. Required for proper morphology and bioenergetic functions of mitochondria. Required for maintenance of neurons. The protein is Enoyl-[acyl-carrier-protein] reductase, mitochondrial (MECR) of Homo sapiens (Human).